Reading from the N-terminus, the 264-residue chain is uncharacterized protein (264 aa).

Residues 7–27 (LTLGICLVLLIILIVGYVIMT) form a helical membrane-spanning segment.

The protein belongs to the staphylococcal tandem lipoprotein family.

The protein resides in the cell membrane. This is an uncharacterized protein from Staphylococcus aureus (strain MW2).